Here is a 375-residue protein sequence, read N- to C-terminus: tRNA-specific 2-thiouridylase MnmA (375 aa).

ATP-binding positions include Ala9–Ser16 and Leu35. Cys105 serves as the catalytic Nucleophile. A disulfide bridge connects residues Cys105 and Cys201. Residue Gly129 participates in ATP binding. The interaction with tRNA stretch occupies residues Lys151–Gln153. Catalysis depends on Cys201, which acts as the Cysteine persulfide intermediate. The segment at Arg307–Tyr308 is interaction with tRNA.

Belongs to the MnmA/TRMU family.

Its subcellular location is the cytoplasm. It carries out the reaction S-sulfanyl-L-cysteinyl-[protein] + uridine(34) in tRNA + AH2 + ATP = 2-thiouridine(34) in tRNA + L-cysteinyl-[protein] + A + AMP + diphosphate + H(+). In terms of biological role, catalyzes the 2-thiolation of uridine at the wobble position (U34) of tRNA, leading to the formation of s(2)U34. This is tRNA-specific 2-thiouridylase MnmA from Leptospira interrogans serogroup Icterohaemorrhagiae serovar Lai (strain 56601).